Consider the following 260-residue polypeptide: Large ribosomal subunit protein eL8A (260 aa).

Positions 1–34 (MPSSKKVAPAPLATKSKASTSTKNPLFESTPKNF) are disordered.

The protein belongs to the eukaryotic ribosomal protein eL8 family. As to quaternary structure, component of the large ribosomal subunit. Mature ribosomes consist of a small (40S) and a large (60S) subunit. The 40S subunit contains about 32 different proteins and 1 molecule of RNA (18S). The 60S subunit contains 45 different proteins and 3 molecules of RNA (25S, 5.8S and 5S).

The protein localises to the cytoplasm. Its function is as follows. Component of the ribosome, a large ribonucleoprotein complex responsible for the synthesis of proteins in the cell. The small ribosomal subunit (SSU) binds messenger RNAs (mRNAs) and translates the encoded message by selecting cognate aminoacyl-transfer RNA (tRNA) molecules. The large subunit (LSU) contains the ribosomal catalytic site termed the peptidyl transferase center (PTC), which catalyzes the formation of peptide bonds, thereby polymerizing the amino acids delivered by tRNAs into a polypeptide chain. The nascent polypeptides leave the ribosome through a tunnel in the LSU and interact with protein factors that function in enzymatic processing, targeting, and the membrane insertion of nascent chains at the exit of the ribosomal tunnel. The polypeptide is Large ribosomal subunit protein eL8A (Candida albicans (strain SC5314 / ATCC MYA-2876) (Yeast)).